Reading from the N-terminus, the 606-residue chain is Kelch-like protein 41 (606 aa).

Position 3 is a phosphoserine (S3). Positions 33 to 100 (IDCTLKAGDK…LYSASIDLND (68 aa)) constitute a BTB domain. Positions 135 to 237 (CLAILRLGLL…TEKYFKDHVE (103 aa)) constitute a BACK domain. 5 Kelch repeats span residues 346–398 (QIYV…EVDD), 399–447 (KIYV…SHKG), 448–495 (MIYC…VHKG), 497–542 (IVIA…SLAG), and 544–599 (LYAI…TRLN).

As to quaternary structure, interacts with NRAP. Interacts with LASP1. Part of a complex that contains CUL3, RBX1 and KLHL41. Ubiquitinated by E3 ubiquitin ligase complex formed by CUL3 and RBX1 and probably targeted for proteasome-independent degradation. Quinone-induced oxidative stress increases its ubiquitination. Sarcomeric muscle.

The protein resides in the cytoplasm. Its subcellular location is the cytoskeleton. The protein localises to the cell projection. It localises to the pseudopodium. It is found in the ruffle. The protein resides in the myofibril. Its subcellular location is the sarcomere. The protein localises to the m line. It localises to the sarcoplasmic reticulum membrane. It is found in the endoplasmic reticulum membrane. Functionally, involved in skeletal muscle development and differentiation. Regulates proliferation and differentiation of myoblasts and plays a role in myofibril assembly by promoting lateral fusion of adjacent thin fibrils into mature, wide myofibrils. Required for pseudopod elongation in transformed cells. The polypeptide is Kelch-like protein 41 (KLHL41) (Homo sapiens (Human)).